Consider the following 200-residue polypeptide: Small ribosomal subunit protein uS4 (200 aa).

The segment at 20-41 (SGTGKELEKRPYAPGQHGPNQR) is disordered. An S4 RNA-binding domain is found at 92-155 (ARLDAVVYSL…LKLDIIAESV (64 aa)).

The protein belongs to the universal ribosomal protein uS4 family. As to quaternary structure, part of the 30S ribosomal subunit. Contacts protein S5. The interaction surface between S4 and S5 is involved in control of translational fidelity.

One of the primary rRNA binding proteins, it binds directly to 16S rRNA where it nucleates assembly of the body of the 30S subunit. Functionally, with S5 and S12 plays an important role in translational accuracy. This Staphylococcus saprophyticus subsp. saprophyticus (strain ATCC 15305 / DSM 20229 / NCIMB 8711 / NCTC 7292 / S-41) protein is Small ribosomal subunit protein uS4.